A 546-amino-acid chain; its full sequence is Chaperonin GroEL (546 aa).

Residues 29 to 32, Lys50, 86 to 90, Gly414, 477 to 479, and Asp493 contribute to the ATP site; these read TLGP, DGTTT, and NAL.

It belongs to the chaperonin (HSP60) family. As to quaternary structure, forms a cylinder of 14 subunits composed of two heptameric rings stacked back-to-back. Interacts with the co-chaperonin GroES.

It is found in the cytoplasm. It catalyses the reaction ATP + H2O + a folded polypeptide = ADP + phosphate + an unfolded polypeptide.. In terms of biological role, together with its co-chaperonin GroES, plays an essential role in assisting protein folding. The GroEL-GroES system forms a nano-cage that allows encapsulation of the non-native substrate proteins and provides a physical environment optimized to promote and accelerate protein folding. In Leptospira interrogans serogroup Icterohaemorrhagiae serovar copenhageni (strain Fiocruz L1-130), this protein is Chaperonin GroEL.